The chain runs to 144 residues: Ribonuclease H (144 aa).

Residues 1-141 form the RNase H type-1 domain; it reads MKKVEIFTDG…ADRLASEAAD (141 aa). Mg(2+) contacts are provided by Asp-9, Glu-47, Asp-69, and Asp-133.

This sequence belongs to the RNase H family. As to quaternary structure, monomer. Requires Mg(2+) as cofactor.

The protein resides in the cytoplasm. It catalyses the reaction Endonucleolytic cleavage to 5'-phosphomonoester.. In terms of biological role, endonuclease that specifically degrades the RNA of RNA-DNA hybrids. This is Ribonuclease H from Erythrobacter litoralis (strain HTCC2594).